The sequence spans 456 residues: Bifunctional protein GlmU (456 aa).

The pyrophosphorylase stretch occupies residues 1–229 (MLNNTMSVVI…ISETDGVNNR (229 aa)). UDP-N-acetyl-alpha-D-glucosamine is bound by residues 11 to 14 (LAAG), Lys25, Gln76, 81 to 82 (GT), 103 to 105 (YGD), Gly140, Glu154, Asn169, and Asn227. Residue Asp105 participates in Mg(2+) binding. Position 227 (Asn227) interacts with Mg(2+). The segment at 230 to 250 (LQLSRLERIYQAEQAEKLLLA) is linker. Residues 251-456 (GVMLRDPARF…QGWQRPVKKK (206 aa)) form an N-acetyltransferase region. Residues Arg333 and Lys351 each coordinate UDP-N-acetyl-alpha-D-glucosamine. The active-site Proton acceptor is His363. The UDP-N-acetyl-alpha-D-glucosamine site is built by Tyr366 and Asn377. Residues Ala380, 386 to 387 (NY), Ser405, Ala423, and Arg440 contribute to the acetyl-CoA site.

This sequence in the N-terminal section; belongs to the N-acetylglucosamine-1-phosphate uridyltransferase family. It in the C-terminal section; belongs to the transferase hexapeptide repeat family. In terms of assembly, homotrimer. Mg(2+) serves as cofactor.

It localises to the cytoplasm. It catalyses the reaction alpha-D-glucosamine 1-phosphate + acetyl-CoA = N-acetyl-alpha-D-glucosamine 1-phosphate + CoA + H(+). The catalysed reaction is N-acetyl-alpha-D-glucosamine 1-phosphate + UTP + H(+) = UDP-N-acetyl-alpha-D-glucosamine + diphosphate. Its pathway is nucleotide-sugar biosynthesis; UDP-N-acetyl-alpha-D-glucosamine biosynthesis; N-acetyl-alpha-D-glucosamine 1-phosphate from alpha-D-glucosamine 6-phosphate (route II): step 2/2. It functions in the pathway nucleotide-sugar biosynthesis; UDP-N-acetyl-alpha-D-glucosamine biosynthesis; UDP-N-acetyl-alpha-D-glucosamine from N-acetyl-alpha-D-glucosamine 1-phosphate: step 1/1. The protein operates within bacterial outer membrane biogenesis; LPS lipid A biosynthesis. Catalyzes the last two sequential reactions in the de novo biosynthetic pathway for UDP-N-acetylglucosamine (UDP-GlcNAc). The C-terminal domain catalyzes the transfer of acetyl group from acetyl coenzyme A to glucosamine-1-phosphate (GlcN-1-P) to produce N-acetylglucosamine-1-phosphate (GlcNAc-1-P), which is converted into UDP-GlcNAc by the transfer of uridine 5-monophosphate (from uridine 5-triphosphate), a reaction catalyzed by the N-terminal domain. The polypeptide is Bifunctional protein GlmU (Enterobacter sp. (strain 638)).